A 149-amino-acid chain; its full sequence is Ribonuclease pancreatic (149 aa).

An N-terminal signal peptide occupies residues M1–G25. Positions 32 and 35 each coordinate substrate. Catalysis depends on H37, which acts as the Proton acceptor. 4 cysteine pairs are disulfide-bonded: C51/C109, C65/C120, C83/C135, and C90/C97. N59 carries an N-linked (GlcNAc...) asparagine glycan. Residue K66–T70 participates in substrate binding. N-linked (GlcNAc...) asparagine glycosylation occurs at N87. Positions 91 and 110 each coordinate substrate. The active-site Proton donor is H144.

Belongs to the pancreatic ribonuclease family. Monomer. Interacts with and forms tight 1:1 complexes with RNH1. Dimerization of two such complexes may occur. Interaction with RNH1 inhibits this protein. Pancreas.

It localises to the secreted. The enzyme catalyses an [RNA] containing cytidine + H2O = an [RNA]-3'-cytidine-3'-phosphate + a 5'-hydroxy-ribonucleotide-3'-[RNA].. It catalyses the reaction an [RNA] containing uridine + H2O = an [RNA]-3'-uridine-3'-phosphate + a 5'-hydroxy-ribonucleotide-3'-[RNA].. In terms of biological role, endonuclease that catalyzes the cleavage of RNA on the 3' side of pyrimidine nucleotides. Acts on single-stranded and double-stranded RNA. The chain is Ribonuclease pancreatic (RNASE1) from Abrothrix jelskii (Jelski's altiplano mouse).